The primary structure comprises 279 residues: Phage-like element PBSX protein XepA (279 aa).

It to B.subtilis YqxG/YqdC.

In terms of biological role, not known; does not seem to be involved in host cell lysis. The chain is Phage-like element PBSX protein XepA (xepA) from Bacillus subtilis (strain 168).